Reading from the N-terminus, the 339-residue chain is Transposase for insertion sequence element IS1086 (339 aa).

One can recognise an Integrase catalytic domain in the interval Asp-176–Leu-329.

It belongs to the transposase IS30 family.

In terms of biological role, required for the transposition of the insertion element. This Cupriavidus metallidurans (strain ATCC 43123 / DSM 2839 / NBRC 102507 / CH34) (Ralstonia metallidurans) protein is Transposase for insertion sequence element IS1086 (IS1086).